Here is a 103-residue protein sequence, read N- to C-terminus: Large ribosomal subunit protein uL24 (103 aa).

Belongs to the universal ribosomal protein uL24 family. Part of the 50S ribosomal subunit.

In terms of biological role, one of two assembly initiator proteins, it binds directly to the 5'-end of the 23S rRNA, where it nucleates assembly of the 50S subunit. Its function is as follows. One of the proteins that surrounds the polypeptide exit tunnel on the outside of the subunit. In Haemophilus influenzae (strain ATCC 51907 / DSM 11121 / KW20 / Rd), this protein is Large ribosomal subunit protein uL24.